Reading from the N-terminus, the 235-residue chain is Carboxy-S-adenosyl-L-methionine synthase (235 aa).

S-adenosyl-L-methionine contacts are provided by residues Tyr35, 60–62 (GCS), 83–84 (DN), Asn124, and Arg191.

This sequence belongs to the class I-like SAM-binding methyltransferase superfamily. Cx-SAM synthase family. In terms of assembly, homodimer.

It catalyses the reaction prephenate + S-adenosyl-L-methionine = carboxy-S-adenosyl-L-methionine + 3-phenylpyruvate + H2O. Functionally, catalyzes the conversion of S-adenosyl-L-methionine (SAM) to carboxy-S-adenosyl-L-methionine (Cx-SAM). The polypeptide is Carboxy-S-adenosyl-L-methionine synthase (Campylobacter jejuni subsp. jejuni serotype O:2 (strain ATCC 700819 / NCTC 11168)).